A 224-amino-acid chain; its full sequence is MNQKKAVILLSGGLDSATVVAMAKADGYACYTMSFDYGQRHRAELQAAERVARQLGVIEHKVIGLDLNGMGGSALTDESIAVPESPSEGIPVTYVPARNTVFLSLALGWAEVLDARDIFIGVNAVDYSGYPDCRPEFVEAFERMANLATKAGVEGNGFRIQAPLQYLSKAQIIQAGVARGVDYGLTVSCYQADEQGRACGKCDSCRLRADGFAAAGISDPTPYF.

10-20 (LSGGLDSATVV) contacts ATP. Residues cysteine 189, cysteine 199, cysteine 202, and cysteine 205 each contribute to the Zn(2+) site.

Belongs to the QueC family. It depends on Zn(2+) as a cofactor.

It carries out the reaction 7-carboxy-7-deazaguanine + NH4(+) + ATP = 7-cyano-7-deazaguanine + ADP + phosphate + H2O + H(+). It participates in purine metabolism; 7-cyano-7-deazaguanine biosynthesis. Functionally, catalyzes the ATP-dependent conversion of 7-carboxy-7-deazaguanine (CDG) to 7-cyano-7-deazaguanine (preQ(0)). This is 7-cyano-7-deazaguanine synthase from Pseudomonas aeruginosa (strain LESB58).